Reading from the N-terminus, the 256-residue chain is Hydroxyacylglutathione hydrolase (256 aa).

Histidine 57, histidine 59, aspartate 61, histidine 62, histidine 115, aspartate 134, and histidine 172 together coordinate Zn(2+).

The protein belongs to the metallo-beta-lactamase superfamily. Glyoxalase II family. Monomer. It depends on Zn(2+) as a cofactor.

The catalysed reaction is an S-(2-hydroxyacyl)glutathione + H2O = a 2-hydroxy carboxylate + glutathione + H(+). It functions in the pathway secondary metabolite metabolism; methylglyoxal degradation; (R)-lactate from methylglyoxal: step 2/2. Its function is as follows. Thiolesterase that catalyzes the hydrolysis of S-D-lactoyl-glutathione to form glutathione and D-lactic acid. This Maricaulis maris (strain MCS10) (Caulobacter maris) protein is Hydroxyacylglutathione hydrolase.